Consider the following 376-residue polypeptide: Dual-specificity RNA methyltransferase RlmN (376 aa).

Catalysis depends on Glu-96, which acts as the Proton acceptor. The Radical SAM core domain maps to 102–341; sequence DEDRATLCVS…VVVRKTRGDD (240 aa). A disulfide bridge connects residues Cys-109 and Cys-346. Cys-116, Cys-120, and Cys-123 together coordinate [4Fe-4S] cluster. S-adenosyl-L-methionine contacts are provided by residues 170-171, Ser-202, 224-226, and Asn-303; these read GE and SLH. The S-methylcysteine intermediate role is filled by Cys-346.

It belongs to the radical SAM superfamily. RlmN family. The cofactor is [4Fe-4S] cluster.

It localises to the cytoplasm. The catalysed reaction is adenosine(2503) in 23S rRNA + 2 reduced [2Fe-2S]-[ferredoxin] + 2 S-adenosyl-L-methionine = 2-methyladenosine(2503) in 23S rRNA + 5'-deoxyadenosine + L-methionine + 2 oxidized [2Fe-2S]-[ferredoxin] + S-adenosyl-L-homocysteine. The enzyme catalyses adenosine(37) in tRNA + 2 reduced [2Fe-2S]-[ferredoxin] + 2 S-adenosyl-L-methionine = 2-methyladenosine(37) in tRNA + 5'-deoxyadenosine + L-methionine + 2 oxidized [2Fe-2S]-[ferredoxin] + S-adenosyl-L-homocysteine. Specifically methylates position 2 of adenine 2503 in 23S rRNA and position 2 of adenine 37 in tRNAs. m2A2503 modification seems to play a crucial role in the proofreading step occurring at the peptidyl transferase center and thus would serve to optimize ribosomal fidelity. In Pseudoalteromonas atlantica (strain T6c / ATCC BAA-1087), this protein is Dual-specificity RNA methyltransferase RlmN.